The sequence spans 577 residues: Heavy metal-associated isoprenylated plant protein 34 (577 aa).

The region spanning 9-72 is the HMA domain; the sequence is LQTCVLKVNV…KLSKSGKHAE (64 aa). A metal cation is bound by residues Cys-20 and Cys-23. A compositionally biased stretch (gly residues) spans 77–87; it reads GGGGGGGGGKG. Disordered stretches follow at residues 77–136 and 150–451; these read GGGG…QPMQ and AAHG…GPGG. Residues 97–106 show a composition bias toward low complexity; that stretch reads NLNMGGNNKP. Residues 118-129 show a composition bias toward gly residues; the sequence is KAGGGGGGGQNH. Residues 168–177 show a composition bias toward basic and acidic residues; that stretch reads KDQKKSVKFA. The span at 178–213 shows a compositional bias: acidic residues; sequence DDEDDEFSEDDYDDEDFSEDDYDDDEFDDDEDDDDE. Positions 227 to 244 are enriched in low complexity; sequence HMPPNKMMMPNKMMPQMG. Composition is skewed to gly residues over residues 245 to 254 and 266 to 281; these read GHHGNGGGPK and FKGG…GGGF. Composition is skewed to basic and acidic residues over residues 294–326 and 344–358; these read KNGK…KTDA and NGDE…DGHG. Composition is skewed to gly residues over residues 379–392 and 420–451; these read KKGG…GHGG and GIGG…GPGG. Cys-574 carries the post-translational modification Cysteine methyl ester. Cys-574 carries S-farnesyl cysteine lipidation. Positions 575 to 577 are cleaved as a propeptide — removed in mature form; that stretch reads SIM.

The protein belongs to the HIPP family.

Its function is as follows. Heavy-metal-binding protein. The chain is Heavy metal-associated isoprenylated plant protein 34 from Arabidopsis thaliana (Mouse-ear cress).